Consider the following 454-residue polypeptide: Probable DNA primase large subunit (454 aa).

[4Fe-4S] cluster contacts are provided by Cys-280, Cys-359, Cys-375, and Cys-415.

The protein belongs to the eukaryotic-type primase large subunit family. Heterodimer of a small subunit and a large subunit. It depends on [4Fe-4S] cluster as a cofactor.

DNA primase is the polymerase that synthesizes small RNA primers for the Okazaki fragments made during discontinuous DNA replication. The polypeptide is Probable DNA primase large subunit (Arabidopsis thaliana (Mouse-ear cress)).